A 45-amino-acid polypeptide reads, in one-letter code: Photosystem II reaction center protein K (45 aa).

A propeptide spanning residues 1–8 (MNSALFLA) is cleaved from the precursor. Residues 23–43 (ILPVIPVFFLLLAFVWQAAIG) traverse the membrane as a helical segment.

The protein belongs to the PsbK family. PSII is composed of 1 copy each of membrane proteins PsbA, PsbB, PsbC, PsbD, PsbE, PsbF, PsbH, PsbI, PsbJ, PsbK, PsbL, PsbM, PsbT, PsbX, PsbY, PsbZ, Psb30/Ycf12, at least 3 peripheral proteins of the oxygen-evolving complex and a large number of cofactors. It forms dimeric complexes.

Its subcellular location is the plastid. The protein localises to the chloroplast thylakoid membrane. In terms of biological role, one of the components of the core complex of photosystem II (PSII). PSII is a light-driven water:plastoquinone oxidoreductase that uses light energy to abstract electrons from H(2)O, generating O(2) and a proton gradient subsequently used for ATP formation. It consists of a core antenna complex that captures photons, and an electron transfer chain that converts photonic excitation into a charge separation. The polypeptide is Photosystem II reaction center protein K (Pyropia yezoensis (Susabi-nori)).